Here is a 100-residue protein sequence, read N- to C-terminus: Urease subunit gamma (100 aa).

Belongs to the urease gamma subunit family. As to quaternary structure, heterotrimer of UreA (gamma), UreB (beta) and UreC (alpha) subunits. Three heterotrimers associate to form the active enzyme.

It localises to the cytoplasm. The enzyme catalyses urea + 2 H2O + H(+) = hydrogencarbonate + 2 NH4(+). Its pathway is nitrogen metabolism; urea degradation; CO(2) and NH(3) from urea (urease route): step 1/1. This Lachnoclostridium phytofermentans (strain ATCC 700394 / DSM 18823 / ISDg) (Clostridium phytofermentans) protein is Urease subunit gamma.